The primary structure comprises 559 residues: Glucose-6-phosphate isomerase 2 (559 aa).

Glu367 (proton donor) is an active-site residue. Active-site residues include His398 and Lys522.

The protein belongs to the GPI family.

Its subcellular location is the cytoplasm. It carries out the reaction alpha-D-glucose 6-phosphate = beta-D-fructose 6-phosphate. Its pathway is carbohydrate biosynthesis; gluconeogenesis. The protein operates within carbohydrate degradation; glycolysis; D-glyceraldehyde 3-phosphate and glycerone phosphate from D-glucose: step 2/4. Its function is as follows. Catalyzes the reversible isomerization of glucose-6-phosphate to fructose-6-phosphate. This is Glucose-6-phosphate isomerase 2 from Chromohalobacter salexigens (strain ATCC BAA-138 / DSM 3043 / CIP 106854 / NCIMB 13768 / 1H11).